The following is a 410-amino-acid chain: Monoglucosyldiacylglycerol epimerase (410 aa).

A signal peptide spans Met-1–Ala-14. The next 2 membrane-spanning stretches (helical) occupy residues Ala-71–Phe-91 and Leu-96–Ala-116. The Proton acceptor role is filled by Tyr-320. Residues Ile-380–Ser-400 traverse the membrane as a helical segment.

It belongs to the short-chain dehydrogenases/reductases (SDR) family.

It is found in the membrane. It carries out the reaction a 1,2-diacyl-3-O-(beta-D-glucopyranosyl)-sn-glycerol = a 1,2-diacyl-3-O-(beta-D-galactosyl)-sn-glycerol. Involved in the biosynthesis of galactolipids found in the photosynthetic membranes. Catalyzes the isomerization of monoglucosyldiacylglycerol (GlcDG) to yield monogalactosyldiacylglycerol (MGDG). This is Monoglucosyldiacylglycerol epimerase from Synechocystis sp. (strain ATCC 27184 / PCC 6803 / Kazusa).